A 346-amino-acid chain; its full sequence is UDP-N-acetylenolpyruvoylglucosamine reductase (346 aa).

An FAD-binding PCMH-type domain is found at Leu-18–His-189. Arg-165 is an active-site residue. Ser-240 (proton donor) is an active-site residue. Residue Glu-336 is part of the active site.

The protein belongs to the MurB family. It depends on FAD as a cofactor.

Its subcellular location is the cytoplasm. The enzyme catalyses UDP-N-acetyl-alpha-D-muramate + NADP(+) = UDP-N-acetyl-3-O-(1-carboxyvinyl)-alpha-D-glucosamine + NADPH + H(+). It functions in the pathway cell wall biogenesis; peptidoglycan biosynthesis. Cell wall formation. The sequence is that of UDP-N-acetylenolpyruvoylglucosamine reductase from Neisseria meningitidis serogroup B (strain ATCC BAA-335 / MC58).